Consider the following 247-residue polypeptide: MNIIPCSIKTLKGLYDISGVEVGQHFYWQIGGFQIHAQVLITSWVVITILLGSVIIAVRNPQTIPTDGQNFFEYVLEFIRDLSKTQIGEEYGPWVPFIGTMFLFIFVSNWSGALLPWKIIQLPHGELAAPTNDINTTVALALLTSAAYFYAGLSKKGLSYFEKYIKPTPILLPINILEDFTKPLSLSFRLFGNILADELVVVVLVSLVPLVVPIPVMFLGLFTSGIQALIFATLAAAYIGESMEGHH.

The next 5 helical transmembrane spans lie at 38 to 58 (QVLITSWVVITILLGSVIIAV), 95 to 115 (VPFIGTMFLFIFVSNWSGALL), 134 to 154 (INTTVALALLTSAAYFYAGLS), 199 to 219 (LVVVVLVSLVPLVVPIPVMFL), and 220 to 240 (GLFTSGIQALIFATLAAAYIG).

It belongs to the ATPase A chain family. F-type ATPases have 2 components, CF(1) - the catalytic core - and CF(0) - the membrane proton channel. CF(1) has five subunits: alpha(3), beta(3), gamma(1), delta(1), epsilon(1). CF(0) has four main subunits: a, b, b' and c.

The protein localises to the plastid. It localises to the chloroplast thylakoid membrane. Functionally, key component of the proton channel; it plays a direct role in the translocation of protons across the membrane. The polypeptide is ATP synthase subunit a, chloroplastic (Oryza sativa subsp. indica (Rice)).